The primary structure comprises 290 residues: Feruloyl esterase D (290 aa).

Residues 1–25 form the signal peptide; that stretch reads MAGLHSRLTTFLLLLLSALPAIAAA. The segment at 260–280 is disordered; it reads HGGDHNPSQRDPGQNDPFAPR.

This sequence belongs to the serine esterase family.

It is found in the secreted. The catalysed reaction is feruloyl-polysaccharide + H2O = ferulate + polysaccharide.. Its function is as follows. Involved in degradation of plant cell walls. Hydrolyzes the feruloyl-arabinose ester bond in arabinoxylans as well as the feruloyl-galactose and feruloyl-arabinose ester bonds in pectin. Active against methyl esters of ferulate (MFA), sinapate (MSA), caffeate (MCA) and p-coumarate (MpCA). This Neurospora crassa (strain ATCC 24698 / 74-OR23-1A / CBS 708.71 / DSM 1257 / FGSC 987) protein is Feruloyl esterase D.